The chain runs to 425 residues: Histidine--tRNA ligase (425 aa).

This sequence belongs to the class-II aminoacyl-tRNA synthetase family. As to quaternary structure, homodimer.

It is found in the cytoplasm. It catalyses the reaction tRNA(His) + L-histidine + ATP = L-histidyl-tRNA(His) + AMP + diphosphate + H(+). In Shewanella oneidensis (strain ATCC 700550 / JCM 31522 / CIP 106686 / LMG 19005 / NCIMB 14063 / MR-1), this protein is Histidine--tRNA ligase.